The primary structure comprises 63 residues: Conotoxin Tx-D0111 (63 aa).

An N-terminal signal peptide occupies residues 1–19 (MRCLPVFVILLLLIASTPS). Positions 20–47 (DTVPLKTKDDMPQASFHGNARRTLQMLS) are excised as a propeptide.

This sequence belongs to the conotoxin T superfamily. Post-translationally, contains 2 disulfide bonds that can be either 'C1-C3, C2-C4' or 'C1-C4, C2-C3', since these disulfide connectivities have been observed for conotoxins with cysteine framework V (for examples, see AC P0DQQ7 and AC P81755). As to expression, expressed by the venom duct.

It is found in the secreted. The protein is Conotoxin Tx-D0111 of Conus textile (Cloth-of-gold cone).